Here is a 247-residue protein sequence, read N- to C-terminus: MAVAGLLLRPPPCVAMCTPSPSPFPSSQRRRRRRLTLAQPYCTLGLSFVSGRHHRFLLRRRRRTESKRTSRGTGVYASLFGVGAPEALVIGVVALLVFGPKGLAEVARNLGKTLRAFQPTIRELQDVSREFRSTLEREIGLDEVPPSMNYRPPTMNNSQQPAIDQSSDDKPEAAPYTSEELIKVTEEQLAASAAAAWNTQEPPPSQQKEAAATSESNDGAISRGSDGAGAAMSEPNRNISEKTETER.

The N-terminal 76 residues, 1 to 76 (MAVAGLLLRP…KRTSRGTGVY (76 aa)), are a transit peptide targeting the chloroplast. The Lumenal portion of the chain corresponds to 77–78 (AS). Residues 79–99 (LFGVGAPEALVIGVVALLVFG) form a helical membrane-spanning segment. The Stromal portion of the chain corresponds to 100-247 (PKGLAEVARN…NISEKTETER (148 aa)). The segment at 137-247 (REIGLDEVPP…NISEKTETER (111 aa)) is disordered. The segment covering 154 to 165 (TMNNSQQPAIDQ) has biased composition (polar residues).

It belongs to the TatB family. As to quaternary structure, in thylakoid membranes, TATC and TATB form a large receptor complex, containing about eight TATC-TATB pairs, which binds the precursor protein. Twin arginine signal peptide promotes pH-triggered docking of TATA oligomers to TATC-TATB receptor complex, inducing a conformational switch of TATA that results in activation of the translocase. TATA dissociates from TATC-TATB upon completion of translocation.

It is found in the plastid. It localises to the chloroplast thylakoid membrane. Its function is as follows. Part of the twin-arginine translocation (Tat) system that transports large folded proteins containing a characteristic twin-arginine motif in their signal peptide across the thylakoid membrane. Involved in delta pH-dependent protein transport required for chloroplast development, especially thylakoid membrane formation. TATC and TATB mediate precursor recognition, whereas TATA facilitates translocation. The sequence is that of Sec-independent protein translocase protein TATB, chloroplastic (TATB) from Oryza sativa subsp. japonica (Rice).